The sequence spans 1213 residues: Probable ATP-binding protein BrxC (1213 aa).

This sequence belongs to the BrxC family.

In terms of biological role, BREX systems (bacteriophage exclusion) provide immunity against bacteriophage. Part of a type 1 BREX system which protects against dsDNA phage. This system allows phage adsorption but prevents phage DNA replication, without degradation of the phage DNA. Methylation of bacterial DNA by PglX guides self/non-self discrimination. When the brxA-brxB-brxC-pglX-pglZ-brxL genes are transformed into a susceptible E.coli strain (BW25113) they confer very high resistance to infection by bacteriophage VR7 and VpaE1, about 100-fold protection against lambda, T5 and T7 and no protection against RNA phage Qbeta, ssDNA phage M13 or dSDNA phage T4 and VR5. Glycosylated phage DNA is not susceptible to BREX. The BREX system does not confer resistance to lysogenic lambda phage, i.e. prophage that are integrated into the chromosomal DNA and then induced to form phage. This is Probable ATP-binding protein BrxC from Escherichia coli O9:H4 (strain HS).